Reading from the N-terminus, the 187-residue chain is Resolvase OPG149 (187 aa).

This sequence belongs to the RuvC family. Poxviruses-type subfamily. Mg(2+) is required as a cofactor.

In terms of biological role, plays a role in DNA replication by cleaving viral DNA concatamers to yield unit-length viral genomes. The concatamer junctions contain inverted repeat sequences that can be extruded as cruciforms, yielding Holliday junctions that A22 protein cleaves. The chain is Resolvase OPG149 (OPG149) from Variola virus (isolate Human/India/Ind3/1967) (VARV).